The sequence spans 386 residues: Probable magnesium transporter NIPA5 (386 aa).

The Extracellular portion of the chain corresponds to 1 to 18 (MVYSSGSWRDAYKGMSSD). Residues 19–39 (NVKGLVLALSSSIFIGASFIV) traverse the membrane as a helical segment. The Cytoplasmic portion of the chain corresponds to 40–61 (KKKGLKKAGASGLRAGSGGYSY). 2 helical membrane-spanning segments follow: residues 62 to 82 (LLEP…IANF) and 83 to 103 (AAYA…SIII). Residues 104–115 (SASLAHIILQEK) are Cytoplasmic-facing. The helical transmembrane segment at 116–136 (LHTFGILGCALCIVGSVTIVL) threads the bilayer. Residues 137–157 (HAPQEQDIVSVLEVWNLATEP) are Extracellular-facing. The chain crosses the membrane as a helical span at residues 158–178 (AFLFYAAAVVGAAIVLIVQFI). At 179 to 189 (PLYGQSHVMVY) the chain is on the cytoplasmic side. Residues 190-210 (IGVCSLIGSLSVMSVKALGIA) traverse the membrane as a helical segment. The Extracellular segment spans residues 211–220 (LKLTFSGTNQ). Residues 221–241 (LGYPQTWVFTVIVLFCVITQM) traverse the membrane as a helical segment. The Cytoplasmic portion of the chain corresponds to 242-255 (NYLNKALDTFNTAV). Residues 256-276 (VSPIYYVMFTSLTILASVIMF) form a helical membrane-spanning segment. Over 277 to 283 (KDWDRQS) the chain is Extracellular. Residues 284-304 (GTQIMTELCGFVTILSGTFLL) traverse the membrane as a helical segment. Residues 305 to 386 (HTTTDMVDGE…LRRQESSLRS (82 aa)) are Cytoplasmic-facing. Residues 352 to 386 (RQESAKSPRPARQNKQLEDDLEAVPLRRQESSLRS) are disordered. A compositionally biased stretch (basic and acidic residues) spans 376–386 (PLRRQESSLRS).

Belongs to the NIPA (TC 2.A.7) family. As to quaternary structure, homodimer.

It localises to the cell membrane. The protein localises to the early endosome. Its function is as follows. Acts as a Mg(2+) transporter. Can also transport other divalent cations such as Fe(2+), Sr(2+), Ba(2+), Mn(2+) and Co(2+) but to a much less extent than Mg(2+). The protein is Probable magnesium transporter NIPA5 of Arabidopsis thaliana (Mouse-ear cress).